Here is a 149-residue protein sequence, read N- to C-terminus: Transcriptional repressor NrdR (149 aa).

A zinc finger spans residues 3-34; the sequence is CPFCSATDTKVIDSRLVSDGHQVRRRRQCLAC. The 91-residue stretch at 49–139 folds into the ATP-cone domain; that stretch reads PKVIKSNGNR…VYRSFEDIKE (91 aa).

It belongs to the NrdR family. The cofactor is Zn(2+).

Its function is as follows. Negatively regulates transcription of bacterial ribonucleotide reductase nrd genes and operons by binding to NrdR-boxes. The chain is Transcriptional repressor NrdR from Aliivibrio fischeri (strain ATCC 700601 / ES114) (Vibrio fischeri).